The primary structure comprises 356 residues: Sensor protein BasS (356 aa).

The Cytoplasmic portion of the chain corresponds to 1-13 (MRFQRRAMTLRQR). Residues 14–34 (LMLTIGLILLVFQLISTFWLW) traverse the membrane as a helical segment. The Periplasmic portion of the chain corresponds to 35 to 64 (HESTEQIQLFEQALRDNRNNDRHIMHEIRE). A helical membrane pass occupies residues 65-88 (AVASLIVPGVFMVSLTLLICYQAV). An HAMP domain is found at 89–141 (RRITRPLAELQKELEARTADNLAPIAIHSSTLEIESVVSAINQLVTRLTTTLD). The Cytoplasmic segment spans residues 89–356 (RRITRPLAEL…TRAWVLLKKA (268 aa)). Residues 149–356 (DVAHELRTPL…TRAWVLLKKA (208 aa)) form the Histidine kinase domain. A Phosphohistidine; by autocatalysis modification is found at histidine 152.

Post-translationally, autophosphorylated.

Its subcellular location is the cell inner membrane. The catalysed reaction is ATP + protein L-histidine = ADP + protein N-phospho-L-histidine.. Its function is as follows. Member of the two-component regulatory system BasS/BasR. Autophosphorylates and activates BasR by phosphorylation. Plays a role in the adaptation of the organism to the host environment, in particular to neutrophils, and therefore it plays a role in virulence as well. This Salmonella typhimurium (strain LT2 / SGSC1412 / ATCC 700720) protein is Sensor protein BasS (basS).